The following is an 884-amino-acid chain: Exocyst complex component 2 (884 aa).

A compositionally biased stretch (basic and acidic residues) spans 1-11; it reads MEENAQARERL. Residues 1–27 form a disordered region; sequence MEENAQARERLPPTVTGLSPTEGVPGT. The IPT/TIG domain maps to 13-98; that stretch reads PTVTGLSPTE…GSSNVKFRVF (86 aa). Coiled coils occupy residues 178 to 206 and 846 to 874; these read ADAT…SEEM and NQRL…AENL.

It belongs to the SEC5 family. The exocyst complex is composed of sec-3/exoc1, sec-5/exoc2, sec-6/exoc3, sec-8/exoc4, sec-10/exoc5, sec-15/exoc6, exo-70/exoc7 and exo-84/exoc8.

Its function is as follows. Component of the exocyst complex involved in the docking of exocytic vesicles with fusion sites on the plasma membrane. This is Exocyst complex component 2 (sec-5) from Caenorhabditis elegans.